Here is a 466-residue protein sequence, read N- to C-terminus: Alpha-1,3-mannosyltransferase CMT1 (466 aa).

The disordered stretch occupies residues 1–23 (MFRNTLRTFPRPATPSLPTSSHS). Residues 1-33 (MFRNTLRTFPRPATPSLPTSSHSPIARASLSKS) lie on the Cytoplasmic side of the membrane. The helical; Signal-anchor for type II membrane protein transmembrane segment at 34–54 (PLFVLSLVLVCIFFLSFLSHP) threads the bilayer. Topologically, residues 55 to 466 (DPSARKLQWP…ETRWVQPWLE (412 aa)) are lumenal.

Mg(2+) is required as a cofactor. Requires Mn(2+) as cofactor. The cofactor is Co(2+).

It is found in the golgi apparatus membrane. It functions in the pathway protein modification; protein glycosylation. Functionally, responsible for addition of mannose residues in an alpha-1,3 linkage to a polymannosly precursor. May be involved in synthesis of capsule glucuronoxylomannan. The sequence is that of Alpha-1,3-mannosyltransferase CMT1 from Cryptococcus neoformans var. neoformans serotype D (strain JEC21 / ATCC MYA-565) (Filobasidiella neoformans).